A 382-amino-acid chain; its full sequence is Chaperone protein DnaJ (382 aa).

Positions 5–70 constitute a J domain; it reads DYYETLGVSR…NKRAAYDRYG (66 aa). Residues 140–218 form a CR-type zinc finger; it reads GKTAQIRVPT…CHGQGRITEE (79 aa). Residues Cys153, Cys156, Cys170, Cys173, Cys192, Cys195, Cys206, and Cys209 each coordinate Zn(2+). CXXCXGXG motif repeat units follow at residues 153-160, 170-177, 192-199, and 206-213; these read CDVCSGSG, CGTCQGSG, CPTCHGRG, and CGKCHGQG.

Belongs to the DnaJ family. As to quaternary structure, homodimer. It depends on Zn(2+) as a cofactor.

It localises to the cytoplasm. In terms of biological role, participates actively in the response to hyperosmotic and heat shock by preventing the aggregation of stress-denatured proteins and by disaggregating proteins, also in an autonomous, DnaK-independent fashion. Unfolded proteins bind initially to DnaJ; upon interaction with the DnaJ-bound protein, DnaK hydrolyzes its bound ATP, resulting in the formation of a stable complex. GrpE releases ADP from DnaK; ATP binding to DnaK triggers the release of the substrate protein, thus completing the reaction cycle. Several rounds of ATP-dependent interactions between DnaJ, DnaK and GrpE are required for fully efficient folding. Also involved, together with DnaK and GrpE, in the DNA replication of plasmids through activation of initiation proteins. This chain is Chaperone protein DnaJ, found in Rhizobium rhizogenes (strain K84 / ATCC BAA-868) (Agrobacterium radiobacter).